The sequence spans 234 residues: Large ribosomal subunit protein uL1 (234 aa).

This sequence belongs to the universal ribosomal protein uL1 family. In terms of assembly, part of the 50S ribosomal subunit.

Its function is as follows. Binds directly to 23S rRNA. The L1 stalk is quite mobile in the ribosome, and is involved in E site tRNA release. Protein L1 is also a translational repressor protein, it controls the translation of the L11 operon by binding to its mRNA. The polypeptide is Large ribosomal subunit protein uL1 (Serratia marcescens).